Reading from the N-terminus, the 351-residue chain is MSASTTATLRHDWTLAEVKALFVQPFNDLLFQAQTVHRAHFDANRVQVSTLLSIKTGACPEDCKYCPQSGHYNTGLEKEKLMEVQKVLEEAARAKAIGSTRFCMGAAWKHPSAKDMPYVLKMVEGVKAMGLETCMTLGRLDQDQTEALAKAGLDYYNHNLDTSPEFYGSIITTRTYAERLQTLAYVRDAGMKICSGGILGMGESLDDRANLLIQLANLPEHPESVPINMLVKVAGTPLENADDVDPFDFIRMLAVARILMPQSHVRLSAGREAMNEQMQALAFFAGANSIFYGDKLLTTANPQADKDMQLFARLGIQPEAREEHADEVHQAAIEQALVEQKSSEQFYNAAV.

One can recognise a Radical SAM core domain in the interval 44 to 262; it reads NRVQVSTLLS…LAVARILMPQ (219 aa). Residues cysteine 59, cysteine 63, and cysteine 66 each coordinate [4Fe-4S] cluster. [2Fe-2S] cluster contacts are provided by cysteine 103, cysteine 134, cysteine 194, and arginine 266.

It belongs to the radical SAM superfamily. Biotin synthase family. In terms of assembly, homodimer. The cofactor is [4Fe-4S] cluster. [2Fe-2S] cluster serves as cofactor.

The enzyme catalyses (4R,5S)-dethiobiotin + (sulfur carrier)-SH + 2 reduced [2Fe-2S]-[ferredoxin] + 2 S-adenosyl-L-methionine = (sulfur carrier)-H + biotin + 2 5'-deoxyadenosine + 2 L-methionine + 2 oxidized [2Fe-2S]-[ferredoxin]. It functions in the pathway cofactor biosynthesis; biotin biosynthesis; biotin from 7,8-diaminononanoate: step 2/2. Functionally, catalyzes the conversion of dethiobiotin (DTB) to biotin by the insertion of a sulfur atom into dethiobiotin via a radical-based mechanism. The polypeptide is Biotin synthase (Pseudomonas fluorescens (strain Pf0-1)).